Consider the following 36-residue polypeptide: Photosystem I reaction center subunit VIII (36 aa).

A helical transmembrane segment spans residues 8 to 28; that stretch reads SVLVPLVGLIFPAMAMASLFL.

Belongs to the PsaI family.

The protein resides in the plastid. Its subcellular location is the chloroplast thylakoid membrane. In terms of biological role, may help in the organization of the PsaL subunit. In Daucus carota (Wild carrot), this protein is Photosystem I reaction center subunit VIII.